Reading from the N-terminus, the 137-residue chain is ATP synthase epsilon chain (137 aa).

This sequence belongs to the ATPase epsilon chain family. F-type ATPases have 2 components, CF(1) - the catalytic core - and CF(0) - the membrane proton channel. CF(1) has five subunits: alpha(3), beta(3), gamma(1), delta(1), epsilon(1). CF(0) has three main subunits: a, b and c.

It localises to the cellular thylakoid membrane. Produces ATP from ADP in the presence of a proton gradient across the membrane. This Trichodesmium erythraeum (strain IMS101) protein is ATP synthase epsilon chain.